Here is a 312-residue protein sequence, read N- to C-terminus: Zinc transporter ZitB (312 aa).

A run of 6 helical transmembrane segments spans residues 16–36 (LLIA…GGWL), 40–60 (LALL…FIAL), 81–101 (LTTL…ILIV), 117–137 (TPML…FWIL), 153–173 (LHVL…IVIL), and 177–197 (WTPI…RSAW).

Belongs to the cation diffusion facilitator (CDF) transporter (TC 2.A.4) family. SLC30A subfamily.

The protein resides in the cell inner membrane. Its function is as follows. Involved in zinc efflux across the cytoplasmic membrane, thus reducing zinc accumulation in the cytoplasm and rendering bacteria more resistant to zinc. It may contribute to zinc homeostasis at low concentrations of zinc. The protein is Zinc transporter ZitB of Yersinia pestis.